A 175-amino-acid chain; its full sequence is Inorganic pyrophosphatase (175 aa).

Substrate-binding residues include Lys-30, Arg-44, and Tyr-56. Mg(2+)-binding residues include Asp-66, Asp-71, and Asp-103. Tyr-142 lines the substrate pocket.

Belongs to the PPase family. Homohexamer. Mg(2+) serves as cofactor.

The protein resides in the cytoplasm. The enzyme catalyses diphosphate + H2O = 2 phosphate + H(+). Catalyzes the hydrolysis of inorganic pyrophosphate (PPi) forming two phosphate ions. This is Inorganic pyrophosphatase from Ralstonia nicotianae (strain ATCC BAA-1114 / GMI1000) (Ralstonia solanacearum).